The primary structure comprises 260 residues: Putative serine protease 45 (260 aa).

Residues 1–234 (MTRHWPWEVS…YTKWIKKQMS (234 aa)) form the Peptidase S1 domain. Cys19 and Cys35 are disulfide-bonded. The active-site Charge relay system is His34. The N-linked (GlcNAc...) asparagine glycan is linked to Asn55. Asp82 serves as the catalytic Charge relay system. Intrachain disulfides connect Cys116–Cys192, Cys151–Cys173, and Cys182–Cys210. The active-site Charge relay system is Ser186.

The protein belongs to the peptidase S1 family.

The polypeptide is Putative serine protease 45 (Homo sapiens (Human)).